A 132-amino-acid chain; its full sequence is Small ribosomal subunit protein uS8 (132 aa).

It belongs to the universal ribosomal protein uS8 family. In terms of assembly, part of the 30S ribosomal subunit. Contacts proteins S5 and S12.

Its function is as follows. One of the primary rRNA binding proteins, it binds directly to 16S rRNA central domain where it helps coordinate assembly of the platform of the 30S subunit. In Aliarcobacter butzleri (strain RM4018) (Arcobacter butzleri), this protein is Small ribosomal subunit protein uS8.